Here is a 1036-residue protein sequence, read N- to C-terminus: Cysteine-rich motor neuron 1 protein (1036 aa).

A signal peptide spans 1–34; that stretch reads MYLVAGDRGLAGCGHLLVSLLGLLLLLARSGTRA. The 78-residue stretch at 35-112 folds into the IGFBP N-terminal domain; that stretch reads LVCLPCDESK…EYEAGVCEDE (78 aa). The Extracellular segment spans residues 35–939; the sequence is LVCLPCDESK…HPSEDSSLDS (905 aa). 4 disulfide bridges follow: Cys-37–Cys-60, Cys-40–Cys-62, Cys-45–Cys-63, and Cys-51–Cys-66. Asn-71 is a glycosylation site (N-linked (GlcNAc...) asparagine). 2 disulfides stabilise this stretch: Cys-74–Cys-90 and Cys-84–Cys-109. N-linked (GlcNAc...) asparagine glycosylation occurs at Asn-113. Residues 314–316 carry the Cell attachment site motif; it reads RGD. Asn-330 is a glycosylation site (N-linked (GlcNAc...) asparagine). 2 VWFC domains span residues 334–391 and 401–457; these read PACV…PVCE and AGCY…PVCE. Antistasin-like domains are found at residues 469–498, 505–532, 539–564, and 567–592; these read CGEL…TCQC, CSER…ICEC, CRPI…ICRC, and CPEL…ICKC. N-linked (GlcNAc...) asparagine glycosylation occurs at Asn-474. VWFC domains lie at 606-663 and 677-735; these read GTCL…PSCA and SICH…PQCT. N-linked (GlcNAc...) asparagine glycosylation occurs at Asn-746. VWFC domains are found at residues 751–809 and 817–874; these read NYCK…PYCI and VVCH…PMCP. A helical membrane pass occupies residues 940–960; that stretch reads IASVVVPIIICLSIIIAFLFI. The Cytoplasmic segment spans residues 961-1036; that stretch reads NQKKQWIPLL…LQADNFYQTV (76 aa). Thr-1035 carries the post-translational modification Phosphothreonine.

In terms of assembly, interacts with BMP4 and BMP7. N-glycosylated. Expressed in pancreas, kidney, skeletal muscle, lung, placenta, brain, heart, spleen, liver and small intestine. Expressed in blood vessels (at protein level).

It is found in the secreted. The protein resides in the cell membrane. In terms of biological role, may play a role in CNS development by interacting with growth factors implicated in motor neuron differentiation and survival. May play a role in capillary formation and maintenance during angiogenesis. Modulates BMP activity by affecting its processing and delivery to the cell surface. This chain is Cysteine-rich motor neuron 1 protein (CRIM1), found in Homo sapiens (Human).